The chain runs to 216 residues: Transmembrane emp24 domain-containing protein eca (216 aa).

Residues 1–20 (MRDQFISLALILCVLHSACG) form the signal peptide. The Lumenal segment spans residues 21 to 182 (LYFHISETER…FRHTSESTNS (162 aa)). In terms of domain architecture, GOLD spans 30-126 (RKCFIEEVPD…QLRVHLDIQV (97 aa)). Residues 134-164 (ANVAQKEKLTELQLRIRQLLDQVEQITKEQN) are a coiled coil. A helical transmembrane segment spans residues 183-203 (RVLWWSLAQTIVLVCMGFWQM). The Cytoplasmic portion of the chain corresponds to 204 to 216 (RHLKSFFEAKKLV). The Prevents secretion from ER motif lies at 213-216 (KKLV).

This sequence belongs to the EMP24/GP25L family.

It is found in the endoplasmic reticulum membrane. Functionally, eca and bai are essential, though not redundant, for dorsoventral patterning of the embryo. Specifically required during early embryogenesis for the activity of maternal tkv, while the zygotic tkv is not affected. Involved in Golgi organization. This chain is Transmembrane emp24 domain-containing protein eca, found in Drosophila sechellia (Fruit fly).